A 310-amino-acid polypeptide reads, in one-letter code: Olfactory receptor 5P1 (310 aa).

Topologically, residues 1–25 (MEPGNHTAVTKFILLGLTDDPTLCV) are extracellular. N-linked (GlcNAc...) asparagine glycosylation occurs at asparagine 5. The helical transmembrane segment at 26-46 (IFFVFFLGIYIVTLVGNISII) threads the bilayer. Over 47 to 54 (NLVRSCPQ) the chain is Cytoplasmic. A helical membrane pass occupies residues 55-75 (LQTPMYMFLSHLAFVDIGYST). The Extracellular segment spans residues 76-99 (SVTPIMLIGFIVHETGLPVHACEA). Cysteines 97 and 189 form a disulfide. Residues 100–120 (QLCSVVTFGTAECFLLAAMAY) form a helical membrane-spanning segment. Residues 121 to 133 (DRYVAICSPLLYS) lie on the Cytoplasmic side of the membrane. A helical membrane pass occupies residues 134–154 (THMSSQICLLLVGASYVGGCV). Topologically, residues 155–196 (NAWTFTGCLLSLSFCGPNKIDHFFCDFSPLLKLSCSDVSIIG) are extracellular. Residues 197–217 (IIPSISAGSIIVVTVFVISVS) form a helical membrane-spanning segment. Over 218–237 (YIYILITILKMRSTEGRHKA) the chain is Cytoplasmic. A helical transmembrane segment spans residues 238–258 (FSTCTSHLTAVTLYYGTITFI). Residues 259-271 (YVMPKSSYSTKQN) are Extracellular-facing. Residues 272-292 (RVVSLFYTVVIPMLNPLIYSL) traverse the membrane as a helical segment. The Cytoplasmic portion of the chain corresponds to 293-310 (RNRDVKEALRKATLRIYS).

It belongs to the G-protein coupled receptor 1 family.

Its subcellular location is the cell membrane. In terms of biological role, potential odorant receptor. The chain is Olfactory receptor 5P1 from Mus musculus (Mouse).